A 240-amino-acid chain; its full sequence is Ubiquinone biosynthesis O-methyltransferase (240 aa).

4 residues coordinate S-adenosyl-L-methionine: arginine 44, glycine 64, aspartate 85, and methionine 129.

Belongs to the methyltransferase superfamily. UbiG/COQ3 family.

The enzyme catalyses a 3-demethylubiquinol + S-adenosyl-L-methionine = a ubiquinol + S-adenosyl-L-homocysteine + H(+). The catalysed reaction is a 3-(all-trans-polyprenyl)benzene-1,2-diol + S-adenosyl-L-methionine = a 2-methoxy-6-(all-trans-polyprenyl)phenol + S-adenosyl-L-homocysteine + H(+). The protein operates within cofactor biosynthesis; ubiquinone biosynthesis. Functionally, O-methyltransferase that catalyzes the 2 O-methylation steps in the ubiquinone biosynthetic pathway. The protein is Ubiquinone biosynthesis O-methyltransferase of Shigella flexneri serotype 5b (strain 8401).